The following is a 549-amino-acid chain: Alanine aminotransferase 2-like (549 aa).

K367 is subject to N6-(pyridoxal phosphate)lysine.

The protein belongs to the class-I pyridoxal-phosphate-dependent aminotransferase family. Alanine aminotransferase subfamily. As to quaternary structure, homodimer. Pyridoxal 5'-phosphate is required as a cofactor.

It catalyses the reaction L-alanine + 2-oxoglutarate = pyruvate + L-glutamate. The protein operates within amino-acid degradation; L-alanine degradation via transaminase pathway; pyruvate from L-alanine: step 1/1. Its function is as follows. Catalyzes the reversible transamination between alanine and 2-oxoglutarate to form pyruvate and glutamate. In Danio rerio (Zebrafish), this protein is Alanine aminotransferase 2-like (gpt2l).